Consider the following 594-residue polypeptide: ATP-dependent RNA helicase DBP9 (594 aa).

A Q motif motif is present at residues 15 to 43 (SSFDSFHLDSRLSQAIRSIGFKHPTLIQS). One can recognise a Helicase ATP-binding domain in the interval 47–229 (PLALQEKRDI…QQFCRSPAIL (183 aa)). 60–67 (ASTGSGKT) serves as a coordination point for ATP. Residues 175-178 (DEVD) carry the DEAD box motif. A Helicase C-terminal domain is found at 242–474 (KLIQYYVKVG…PYNFDIKQVE (233 aa)). A disordered region spans residues 562 to 594 (PFHKNSHRKNGRVVKKKGNVQRKGKSDPLKSFK). Residues 565 to 584 (KNSHRKNGRVVKKKGNVQRK) are compositionally biased toward basic residues. A compositionally biased stretch (basic and acidic residues) spans 585–594 (GKSDPLKSFK).

This sequence belongs to the DEAD box helicase family. DDX56/DBP9 subfamily.

The protein localises to the nucleus. It localises to the nucleolus. It carries out the reaction ATP + H2O = ADP + phosphate + H(+). ATP-binding RNA helicase involved in the biogenesis of 60S ribosomal subunits and is required for the normal formation of 25S and 5.8S rRNAs. This chain is ATP-dependent RNA helicase DBP9 (DBP9), found in Kluyveromyces lactis (strain ATCC 8585 / CBS 2359 / DSM 70799 / NBRC 1267 / NRRL Y-1140 / WM37) (Yeast).